Reading from the N-terminus, the 511-residue chain is Bifunctional purine biosynthesis protein PurH (511 aa).

The MGS-like domain occupies 1–145; it reads MKKRALVSVS…KNHKFVSVIV (145 aa).

Belongs to the PurH family.

The enzyme catalyses (6R)-10-formyltetrahydrofolate + 5-amino-1-(5-phospho-beta-D-ribosyl)imidazole-4-carboxamide = 5-formamido-1-(5-phospho-D-ribosyl)imidazole-4-carboxamide + (6S)-5,6,7,8-tetrahydrofolate. It catalyses the reaction IMP + H2O = 5-formamido-1-(5-phospho-D-ribosyl)imidazole-4-carboxamide. Its pathway is purine metabolism; IMP biosynthesis via de novo pathway; 5-formamido-1-(5-phospho-D-ribosyl)imidazole-4-carboxamide from 5-amino-1-(5-phospho-D-ribosyl)imidazole-4-carboxamide (10-formyl THF route): step 1/1. The protein operates within purine metabolism; IMP biosynthesis via de novo pathway; IMP from 5-formamido-1-(5-phospho-D-ribosyl)imidazole-4-carboxamide: step 1/1. The chain is Bifunctional purine biosynthesis protein PurH from Bacillus cereus (strain ATCC 10987 / NRS 248).